Reading from the N-terminus, the 570-residue chain is Formate--tetrahydrofolate ligase (570 aa).

65-72 is a binding site for ATP; that stretch reads TPHGEGKT.

Belongs to the formate--tetrahydrofolate ligase family.

The catalysed reaction is (6S)-5,6,7,8-tetrahydrofolate + formate + ATP = (6R)-10-formyltetrahydrofolate + ADP + phosphate. It functions in the pathway one-carbon metabolism; tetrahydrofolate interconversion. The sequence is that of Formate--tetrahydrofolate ligase from Shewanella oneidensis (strain ATCC 700550 / JCM 31522 / CIP 106686 / LMG 19005 / NCIMB 14063 / MR-1).